Reading from the N-terminus, the 142-residue chain is uncharacterized protein (142 aa).

This is an uncharacterized protein from Bacillus anthracis.